A 330-amino-acid polypeptide reads, in one-letter code: Solute-binding protein NAS141_03721 (330 aa).

A signal peptide spans 1-27; sequence MSFFTKTAQLVSGAAVAATLFTATAQA. Alpha-D-mannuronate contacts are provided by residues E75, N97, R153, R173, Y196, 213 to 214, and R240; that span reads NE. Residues E75, N97, R153, R173, Y196, 213–214, and R240 each bind alpha-D-taluronate; that span reads NE.

It belongs to the bacterial solute-binding protein 7 family. In terms of assembly, the complex is comprised of an extracytoplasmic solute-binding protein and a heteromeric permease formed by two transmembrane proteins.

Its subcellular location is the periplasm. Its function is as follows. Solute-binding protein that binds D-mannuronate and D-taluronate (in vitro). Probably part of a tripartite ATP-independent periplasmic (TRAP) transport system that mediates solute transport into the cytoplasm. The protein is Solute-binding protein NAS141_03721 of Sulfitobacter sp. (strain NAS-14.1).